Reading from the N-terminus, the 902-residue chain is Cytosolic 10-formyltetrahydrofolate dehydrogenase (902 aa).

The segment at 1-310 is hydrolase domain; that stretch reads MKIAVIGQSL…PASQYYKTAD (310 aa). 88–90 is a binding site for (6R)-10-formyltetrahydrofolate; sequence QFI. H106 functions as the Proton donor in the catalytic mechanism. (6R)-10-formyltetrahydrofolate is bound at residue D142. Residues 318 to 395 form the Carrier domain; that stretch reads DEEKKFSEEI…EFIQMVVRRL (78 aa). S354 carries the O-(pantetheine 4'-phosphoryl)serine modification. Residues 417–902 form an aldehyde dehydrogenase domain region; sequence TVKIPHQLFI…LKTKAVTIEY (486 aa). Residues 571–573, 597–600, 630–635, 650–651, and 673–674 each bind NADP(+); these read IPW, KPAQ, GSLIGQ, GS, and EL. The active-site Proton acceptor is E673. C707 acts as the Proton donor in catalysis. NADP(+) contacts are provided by residues K757 and 804–806; that span reads ESF.

The protein in the N-terminal section; belongs to the GART family. This sequence in the C-terminal section; belongs to the aldehyde dehydrogenase family. ALDH1L subfamily. As to quaternary structure, homotetramer. Post-translationally, phosphopantetheinylation at Ser-354 by AASDHPPT is required for the formyltetrahydrofolate dehydrogenase activity.

The protein resides in the cytoplasm. The protein localises to the cytosol. The enzyme catalyses (6R)-10-formyltetrahydrofolate + NADP(+) + H2O = (6S)-5,6,7,8-tetrahydrofolate + CO2 + NADPH + H(+). Functionally, cytosolic 10-formyltetrahydrofolate dehydrogenase that catalyzes the NADP(+)-dependent conversion of 10-formyltetrahydrofolate to tetrahydrofolate and carbon dioxide. May also have an NADP(+)-dependent aldehyde dehydrogenase activity towards formaldehyde, acetaldehyde, propionaldehyde, and benzaldehyde. Regulates reduced folate pools as well as glycine metabolism. This Xenopus tropicalis (Western clawed frog) protein is Cytosolic 10-formyltetrahydrofolate dehydrogenase (aldh1l1).